Reading from the N-terminus, the 421-residue chain is MSGLPDYLRRPPRGMRDWLPPQFYALRHMEETLSKVAEAFGYRRVETPVVEHFEVLAKKAGQEVVNEIYYFKDKAGRDLGLRFDMTVPIARVISYNLSLPRPIRWYYFTKVFRYDEPQHGRYREFYQFGIELIGSASPRADAEVLQVFTQALDAVGARSYIVKINDRRVVDKLLERLGVSAYRDVIYRALDKKLKLSREEVIKLMAEGGVSLDTAERIYDIAEEMSIEEAVNVITKLDSGLGSFYNKLLKYLEAAVSLDKFRFDMSIVRGLDYYTGMVFEAFAGEYKLAVGGGGRYDDLLELYSGVKMPALGFAIGVERLMEAVGLEGVEKPLDYYIYIFDDDAYPYAVAIAKRLRSAGYSVVVELGEKNLKEVFEYILKIGTRYLIIIGKKELEKGVVKIRDLQRREEFEKPFSEFYGTT.

Belongs to the class-II aminoacyl-tRNA synthetase family.

The protein localises to the cytoplasm. The catalysed reaction is tRNA(His) + L-histidine + ATP = L-histidyl-tRNA(His) + AMP + diphosphate + H(+). The chain is Histidine--tRNA ligase from Pyrobaculum islandicum (strain DSM 4184 / JCM 9189 / GEO3).